Consider the following 853-residue polypeptide: DNA mismatch repair protein MutS (853 aa).

Position 614–621 (614–621) interacts with ATP; the sequence is GPNMGGKS.

This sequence belongs to the DNA mismatch repair MutS family.

Its function is as follows. This protein is involved in the repair of mismatches in DNA. It is possible that it carries out the mismatch recognition step. This protein has a weak ATPase activity. In Escherichia coli O7:K1 (strain IAI39 / ExPEC), this protein is DNA mismatch repair protein MutS.